The following is a 263-amino-acid chain: Chymotrypsinogen 2 (263 aa).

The first 18 residues, 1–18 (MAFLWLLSCFALLGTAFG), serve as a signal peptide directing secretion. Disulfide bonds link C19–C140, C60–C76, C154–C219, C186–C200, and C209–C238. The Peptidase S1 domain maps to 34–261 (IVNGEDAVPG…LIPWVQQILQ (228 aa)). H75 (charge relay system) is an active-site residue. A Phosphoserine modification is found at S93. The active-site Charge relay system is D120. Residue S213 is the Charge relay system of the active site.

It belongs to the peptidase S1 family.

Its subcellular location is the secreted. It is found in the extracellular space. It carries out the reaction Preferential cleavage: Tyr-|-Xaa, Trp-|-Xaa, Phe-|-Xaa, Leu-|-Xaa.. The chain is Chymotrypsinogen 2 (CTRB1) from Canis lupus familiaris (Dog).